The primary structure comprises 798 residues: PR domain zinc finger protein 4 (798 aa).

Residues 408–525 (KQLVLRQSIV…PENELLFYYS (118 aa)) form the SET domain. 5 C2H2-type zinc fingers span residues 586–608 (WKCS…FMGH), 614–636 (HKCD…LKIH), 642–664 (YRCT…MVIH), 670–692 (LKCD…VLIH), and 698–720 (IKCP…LNSH). Residues 726–747 (YVCEKCTKAYLTKYHLTRHLKA) form a C2H2-type 6; degenerate zinc finger. The interval 750-798 (EPASSSSAQDDEDEDGDSGEDGLPGSMTTEGCRMSSAVYSADESLSAHK) is disordered. A compositionally biased stretch (acidic residues) spans 758–769 (QDDEDEDGDSGE).

This sequence belongs to the class V-like SAM-binding methyltransferase superfamily.

It localises to the nucleus. May function as a transcription factor involved in cell differentiation. The protein is PR domain zinc finger protein 4 (Prdm4) of Rattus norvegicus (Rat).